We begin with the raw amino-acid sequence, 55 residues long: Light-harvesting polypeptide B-800/860 beta chain (55 aa).

Over 1 to 21 (ADANKVWPTGLTVAEAEELHT) the chain is Cytoplasmic. Residues 22–44 (YVTNGFRVFVGIAVVAHVLVFAA) traverse the membrane as a helical segment. Residue histidine 38 coordinates a bacteriochlorophyll. The Periplasmic segment spans residues 45 to 55 (HPWGRGGALVA).

Belongs to the antenna complex beta subunit family. The core complex is formed by different alpha and beta chains, binding bacteriochlorophyll molecules, and arranged most probably in tetrameric structures disposed around the reaction center. The non-pigmented gamma chains may constitute additional components.

The protein resides in the cell inner membrane. Its function is as follows. Antenna complexes are light-harvesting systems, which transfer the excitation energy to the reaction centers. This Rhodocyclus tenuis (Rhodospirillum tenue) protein is Light-harvesting polypeptide B-800/860 beta chain.